Here is an 82-residue protein sequence, read N- to C-terminus: Putative membrane protein insertion efficiency factor (82 aa).

Belongs to the UPF0161 family.

The protein localises to the cell inner membrane. In terms of biological role, could be involved in insertion of integral membrane proteins into the membrane. The chain is Putative membrane protein insertion efficiency factor from Thermus thermophilus (strain ATCC BAA-163 / DSM 7039 / HB27).